A 402-amino-acid polypeptide reads, in one-letter code: 4-hydroxy-3-methylbut-2-enyl diphosphate reductase (402 aa).

Cys66 contacts [4Fe-4S] cluster. His96 is a (2E)-4-hydroxy-3-methylbut-2-enyl diphosphate binding site. His96 is a dimethylallyl diphosphate binding site. His96 contacts isopentenyl diphosphate. Residue Cys157 coordinates [4Fe-4S] cluster. His185 contacts (2E)-4-hydroxy-3-methylbut-2-enyl diphosphate. His185 contributes to the dimethylallyl diphosphate binding site. His185 is a binding site for isopentenyl diphosphate. Catalysis depends on Glu187, which acts as the Proton donor. Thr250 is a (2E)-4-hydroxy-3-methylbut-2-enyl diphosphate binding site. Cys288 contributes to the [4Fe-4S] cluster binding site. Residues Ser317, Ser318, Asn319, and Ser379 each coordinate (2E)-4-hydroxy-3-methylbut-2-enyl diphosphate. Positions 317, 318, 319, and 379 each coordinate dimethylallyl diphosphate. Isopentenyl diphosphate is bound by residues Ser317, Ser318, Asn319, and Ser379.

The protein belongs to the IspH family. [4Fe-4S] cluster serves as cofactor.

The enzyme catalyses isopentenyl diphosphate + 2 oxidized [2Fe-2S]-[ferredoxin] + H2O = (2E)-4-hydroxy-3-methylbut-2-enyl diphosphate + 2 reduced [2Fe-2S]-[ferredoxin] + 2 H(+). It carries out the reaction dimethylallyl diphosphate + 2 oxidized [2Fe-2S]-[ferredoxin] + H2O = (2E)-4-hydroxy-3-methylbut-2-enyl diphosphate + 2 reduced [2Fe-2S]-[ferredoxin] + 2 H(+). The protein operates within isoprenoid biosynthesis; dimethylallyl diphosphate biosynthesis; dimethylallyl diphosphate from (2E)-4-hydroxy-3-methylbutenyl diphosphate: step 1/1. Its pathway is isoprenoid biosynthesis; isopentenyl diphosphate biosynthesis via DXP pathway; isopentenyl diphosphate from 1-deoxy-D-xylulose 5-phosphate: step 6/6. Functionally, catalyzes the conversion of 1-hydroxy-2-methyl-2-(E)-butenyl 4-diphosphate (HMBPP) into a mixture of isopentenyl diphosphate (IPP) and dimethylallyl diphosphate (DMAPP). Acts in the terminal step of the DOXP/MEP pathway for isoprenoid precursor biosynthesis. The chain is 4-hydroxy-3-methylbut-2-enyl diphosphate reductase from Crocosphaera subtropica (strain ATCC 51142 / BH68) (Cyanothece sp. (strain ATCC 51142)).